The following is a 177-amino-acid chain: Large ribosomal subunit protein uL6 (177 aa).

It belongs to the universal ribosomal protein uL6 family. As to quaternary structure, part of the 50S ribosomal subunit.

This protein binds to the 23S rRNA, and is important in its secondary structure. It is located near the subunit interface in the base of the L7/L12 stalk, and near the tRNA binding site of the peptidyltransferase center. The chain is Large ribosomal subunit protein uL6 from Rickettsia africae (strain ESF-5).